The sequence spans 207 residues: Cytochrome c biogenesis ATP-binding export protein CcmA (207 aa).

An ABC transporter domain is found at 2-204 (LECENLSCTR…TTIDIRNFNR (203 aa)). 34-41 (GPNGSGKT) contributes to the ATP binding site.

The protein belongs to the ABC transporter superfamily. CcmA exporter (TC 3.A.1.107) family. As to quaternary structure, the complex is composed of two ATP-binding proteins (CcmA) and two transmembrane proteins (CcmB).

It is found in the cell membrane. The enzyme catalyses heme b(in) + ATP + H2O = heme b(out) + ADP + phosphate + H(+). In terms of biological role, part of the ABC transporter complex CcmAB involved in the biogenesis of c-type cytochromes; once thought to export heme, this seems not to be the case, but its exact role is uncertain. Responsible for energy coupling to the transport system. The polypeptide is Cytochrome c biogenesis ATP-binding export protein CcmA (Wolbachia pipientis wMel).